Here is a 141-residue protein sequence, read N- to C-terminus: MMINAKKLMKLAKKWQQRAALKRKRISFQRSSITTSSQTAVEKGCFVVYTADKIRFSFPLSYLSNTIVQELLKISEEEFGLPTEGPITLPFDSAFLEYLINLIQRRMDEDTEKALLLSISSARSSFQPQQHCSATQQLLVF.

This sequence belongs to the ARG7 family. As to expression, expressed in stamen filaments and petals.

Its subcellular location is the cell membrane. In terms of biological role, may promote auxin-stimulated organ elongation, such as hypocotyls, stamen filaments and petals. The polypeptide is Auxin-responsive protein SAUR62 (Arabidopsis thaliana (Mouse-ear cress)).